The primary structure comprises 325 residues: tRNA N(3)-methylcytidine methyltransferase Mettl2 (325 aa).

S-adenosyl-L-methionine contacts are provided by tryptophan 96 and tyrosine 100. S-adenosyl-L-homocysteine-binding residues include tyrosine 100, histidine 112, glutamate 138, glycine 140, aspartate 165, aspartate 191, and isoleucine 212. The S-adenosyl-L-methionine site is built by glycine 140, aspartate 165, aspartate 191, and isoleucine 212.

Belongs to the methyltransferase superfamily. METL family. In terms of assembly, interacts with Psn. In terms of tissue distribution, widely expressed. Expressed in ovaries, head, thorax and abdomen of adult flies, and in the CNS of third instar larvae. Isoform 2 is predominantly expressed in larvae and in adult tissues that have been tested.

Probable methyltransferase. The sequence is that of tRNA N(3)-methylcytidine methyltransferase Mettl2 from Drosophila melanogaster (Fruit fly).